Here is a 100-residue protein sequence, read N- to C-terminus: Putative pterin-4-alpha-carbinolamine dehydratase (100 aa).

The protein belongs to the pterin-4-alpha-carbinolamine dehydratase family.

The enzyme catalyses (4aS,6R)-4a-hydroxy-L-erythro-5,6,7,8-tetrahydrobiopterin = (6R)-L-erythro-6,7-dihydrobiopterin + H2O. This chain is Putative pterin-4-alpha-carbinolamine dehydratase, found in Alteromonas mediterranea (strain DSM 17117 / CIP 110805 / LMG 28347 / Deep ecotype).